A 207-amino-acid chain; its full sequence is uncharacterized protein (207 aa).

This is an uncharacterized protein from Frog virus 3 (isolate Goorha) (FV-3).